The primary structure comprises 431 residues: Glutamate-1-semialdehyde 2,1-aminomutase (431 aa).

Lysine 270 is subject to N6-(pyridoxal phosphate)lysine.

This sequence belongs to the class-III pyridoxal-phosphate-dependent aminotransferase family. HemL subfamily. As to quaternary structure, homodimer. The cofactor is pyridoxal 5'-phosphate.

Its subcellular location is the cytoplasm. The enzyme catalyses (S)-4-amino-5-oxopentanoate = 5-aminolevulinate. It participates in porphyrin-containing compound metabolism; protoporphyrin-IX biosynthesis; 5-aminolevulinate from L-glutamyl-tRNA(Glu): step 2/2. This is Glutamate-1-semialdehyde 2,1-aminomutase from Limosilactobacillus reuteri subsp. reuteri (strain JCM 1112) (Lactobacillus reuteri).